Here is a 454-residue protein sequence, read N- to C-terminus: Chromosomal replication initiator protein DnaA (454 aa).

Residues 1-74 (MFDLDKFWQF…IQEAYAYADM (74 aa)) form a domain I, interacts with DnaA modulators region. The tract at residues 74–116 (MEIQPKFEVAGKEGPERLVTPQPRIKTNQEILENRRDEFAQDL) is domain II. The domain III, AAA+ region stretch occupies residues 117 to 333 (QLNSKYTFDT…GALVKVQAHA (217 aa)). Glycine 161, glycine 163, lysine 164, and threonine 165 together coordinate ATP. Residues 334-454 (TIEREDINVD…VYDLKAMLEH (121 aa)) form a domain IV, binds dsDNA region.

The protein belongs to the DnaA family. As to quaternary structure, oligomerizes as a right-handed, spiral filament on DNA at oriC.

It localises to the cytoplasm. Functionally, plays an essential role in the initiation and regulation of chromosomal replication. ATP-DnaA binds to the origin of replication (oriC) to initiate formation of the DNA replication initiation complex once per cell cycle. Binds the DnaA box (a 9 base pair repeat at the origin) and separates the double-stranded (ds)DNA. Forms a right-handed helical filament on oriC DNA; dsDNA binds to the exterior of the filament while single-stranded (ss)DNA is stabiized in the filament's interior. The ATP-DnaA-oriC complex binds and stabilizes one strand of the AT-rich DNA unwinding element (DUE), permitting loading of DNA polymerase. After initiation quickly degrades to an ADP-DnaA complex that is not apt for DNA replication. Binds acidic phospholipids. This is Chromosomal replication initiator protein DnaA from Lactobacillus johnsonii (strain CNCM I-12250 / La1 / NCC 533).